The following is a 38-amino-acid chain: Photosystem II reaction center protein L (38 aa).

A helical transmembrane segment spans residues 17–37 (SLYWGLLLIFVLAVLFSSYIF).

Belongs to the PsbL family. In terms of assembly, PSII is composed of 1 copy each of membrane proteins PsbA, PsbB, PsbC, PsbD, PsbE, PsbF, PsbH, PsbI, PsbJ, PsbK, PsbL, PsbM, PsbT, PsbX, PsbY, PsbZ, Psb30/Ycf12, at least 3 peripheral proteins of the oxygen-evolving complex and a large number of cofactors. It forms dimeric complexes.

It is found in the plastid. The protein localises to the chloroplast thylakoid membrane. In terms of biological role, one of the components of the core complex of photosystem II (PSII). PSII is a light-driven water:plastoquinone oxidoreductase that uses light energy to abstract electrons from H(2)O, generating O(2) and a proton gradient subsequently used for ATP formation. It consists of a core antenna complex that captures photons, and an electron transfer chain that converts photonic excitation into a charge separation. This subunit is found at the monomer-monomer interface and is required for correct PSII assembly and/or dimerization. The polypeptide is Photosystem II reaction center protein L (Tupiella akineta (Green alga)).